We begin with the raw amino-acid sequence, 108 residues long: UPF0060 membrane protein Ent638_1931 (108 aa).

Transmembrane regions (helical) follow at residues 6–26, 29–49, 61–81, and 85–105; these read LLFF…WLWL, GASV…VWLL, AAYG…VDGV, and AYDW…VAGW.

The protein belongs to the UPF0060 family.

The protein localises to the cell inner membrane. The sequence is that of UPF0060 membrane protein Ent638_1931 from Enterobacter sp. (strain 638).